The chain runs to 329 residues: Peroxidase 56 (329 aa).

Positions 1 to 31 (MAALKMTISCFLFLQVIYCLLSSFAPTNVQG) are cleaved as a signal peptide. Disulfide bonds link Cys41/Cys119, Cys74/Cys79, Cys125/Cys325, and Cys204/Cys236. His72 functions as the Proton acceptor in the catalytic mechanism. Ca(2+) is bound by residues Asp73, Val76, Gly78, Glu80, and Ser82. Asn158 carries an N-linked (GlcNAc...) asparagine glycan. A substrate-binding site is contributed by Pro167. Residue Asn172 is glycosylated (N-linked (GlcNAc...) asparagine). His197 contacts heme b. Residue Thr198 coordinates Ca(2+). Asn213 carries N-linked (GlcNAc...) asparagine glycosylation. Ca(2+)-binding residues include Asp248, Ser251, and Asp256.

The protein belongs to the peroxidase family. Classical plant (class III) peroxidase subfamily. It depends on heme b as a cofactor. Ca(2+) serves as cofactor.

It localises to the secreted. It carries out the reaction 2 a phenolic donor + H2O2 = 2 a phenolic radical donor + 2 H2O. In terms of biological role, removal of H(2)O(2), oxidation of toxic reductants, biosynthesis and degradation of lignin, suberization, auxin catabolism, response to environmental stresses such as wounding, pathogen attack and oxidative stress. These functions might be dependent on each isozyme/isoform in each plant tissue. The sequence is that of Peroxidase 56 (PER56) from Arabidopsis thaliana (Mouse-ear cress).